The following is a 401-amino-acid chain: Acetate kinase (401 aa).

Asparagine 7 contacts Mg(2+). An ATP-binding site is contributed by lysine 14. Arginine 91 contacts substrate. The active-site Proton donor/acceptor is aspartate 148. Residues 208-212 (HLGNG), 283-285 (DFR), and 332-336 (GVGEN) contribute to the ATP site. A Mg(2+)-binding site is contributed by glutamate 385.

This sequence belongs to the acetokinase family. Homodimer. Mg(2+) serves as cofactor. Requires Mn(2+) as cofactor.

The protein localises to the cytoplasm. The catalysed reaction is acetate + ATP = acetyl phosphate + ADP. Its pathway is metabolic intermediate biosynthesis; acetyl-CoA biosynthesis; acetyl-CoA from acetate: step 1/2. Catalyzes the formation of acetyl phosphate from acetate and ATP. Can also catalyze the reverse reaction. The chain is Acetate kinase from Caldanaerobacter subterraneus subsp. tengcongensis (strain DSM 15242 / JCM 11007 / NBRC 100824 / MB4) (Thermoanaerobacter tengcongensis).